The following is a 146-amino-acid chain: Kappa-casein (146 aa).

O-linked (GalNAc...) threonine glycans are attached at residues Thr-97, Thr-107, Thr-112, and Thr-118. Thr-121 is subject to Phosphothreonine. Ser-125 carries the phosphoserine; alternate modification. Residue Ser-125 is glycosylated (O-linked (GalNAc...) serine; alternate). The O-linked (GalNAc...) threonine glycan is linked to Thr-142. Ser-143 carries the phosphoserine modification.

This sequence belongs to the kappa-casein family. Mammary gland specific. Secreted in milk.

The protein localises to the secreted. In terms of biological role, kappa-casein stabilizes micelle formation, preventing casein precipitation in milk. This is Kappa-casein (CSN3) from Panthera uncia (Snow leopard).